Consider the following 129-residue polypeptide: HTH-type transcriptional regulator GlnR (129 aa).

The HTH merR-type domain occupies 10-78; the sequence is LFPIGIVMDL…MAGIKQVLLM (69 aa). Positions 13 to 32 form a DNA-binding region, H-T-H motif; it reads IGIVMDLTQLSARQIRYYEE.

Homodimer under conditions of nitrogen excess. Monomer under conditions of nitrogen-limited. Interacts with feedback-inhibited GlnA in order to stabilizes GlnR-DNA complex.

Under conditions of nitrogen excess, the DNA binding activity of GlnR is activated by a transient interaction with feedback-inhibited GlnA. Under conditions of nitrogen-limited, GlnR is autoinhibited by its C-terminal region. Transcription repressor during nitrogen excess. On the contrary of the MerR members, which require longer DNA sites for high-affinity binding, GlnR requires a DNA sequence of 17 nucleotides as minimal binding site. This Bacillus anthracis protein is HTH-type transcriptional regulator GlnR.